Here is a 128-residue protein sequence, read N- to C-terminus: Large ribosomal subunit protein uL22 (128 aa).

The disordered stretch occupies residues 1–22 (MARGHRSQIKRERNANKDTRPS). The span at 9–21 (IKRERNANKDTRP) shows a compositional bias: basic and acidic residues.

It belongs to the universal ribosomal protein uL22 family. In terms of assembly, part of the 50S ribosomal subunit.

Functionally, this protein binds specifically to 23S rRNA; its binding is stimulated by other ribosomal proteins, e.g. L4, L17, and L20. It is important during the early stages of 50S assembly. It makes multiple contacts with different domains of the 23S rRNA in the assembled 50S subunit and ribosome. In terms of biological role, the globular domain of the protein is located near the polypeptide exit tunnel on the outside of the subunit, while an extended beta-hairpin is found that lines the wall of the exit tunnel in the center of the 70S ribosome. The chain is Large ribosomal subunit protein uL22 from Lachnoclostridium phytofermentans (strain ATCC 700394 / DSM 18823 / ISDg) (Clostridium phytofermentans).